We begin with the raw amino-acid sequence, 170 residues long: Adenine phosphoribosyltransferase (170 aa).

Belongs to the purine/pyrimidine phosphoribosyltransferase family. In terms of assembly, homodimer.

Its subcellular location is the cytoplasm. The catalysed reaction is AMP + diphosphate = 5-phospho-alpha-D-ribose 1-diphosphate + adenine. Its pathway is purine metabolism; AMP biosynthesis via salvage pathway; AMP from adenine: step 1/1. Functionally, catalyzes a salvage reaction resulting in the formation of AMP, that is energically less costly than de novo synthesis. The sequence is that of Adenine phosphoribosyltransferase from Prochlorococcus marinus (strain MIT 9312).